The sequence spans 367 residues: Glutamate 5-kinase (367 aa).

Position 8 (K8) interacts with ATP. Residues S49, D136, and N148 each coordinate substrate. ATP is bound by residues 168–169 (TD) and 210–216 (TGGMVTK). Residues 275-353 (AGKLYLDEGA…REISTILGYA (79 aa)) enclose the PUA domain.

It belongs to the glutamate 5-kinase family.

It is found in the cytoplasm. It carries out the reaction L-glutamate + ATP = L-glutamyl 5-phosphate + ADP. It functions in the pathway amino-acid biosynthesis; L-proline biosynthesis; L-glutamate 5-semialdehyde from L-glutamate: step 1/2. Its function is as follows. Catalyzes the transfer of a phosphate group to glutamate to form L-glutamate 5-phosphate. In Nostoc punctiforme (strain ATCC 29133 / PCC 73102), this protein is Glutamate 5-kinase.